We begin with the raw amino-acid sequence, 74 residues long: ATP synthase subunit c (74 aa).

A run of 2 helical transmembrane segments spans residues 8–28 (FIGI…VSNI) and 52–72 (IGAG…MLLI).

The protein belongs to the ATPase C chain family. F-type ATPases have 2 components, F(1) - the catalytic core - and F(0) - the membrane proton channel. F(1) has five subunits: alpha(3), beta(3), gamma(1), delta(1), epsilon(1). F(0) has three main subunits: a(1), b(2) and c(10-14). The alpha and beta chains form an alternating ring which encloses part of the gamma chain. F(1) is attached to F(0) by a central stalk formed by the gamma and epsilon chains, while a peripheral stalk is formed by the delta and b chains.

Its subcellular location is the cell inner membrane. In terms of biological role, f(1)F(0) ATP synthase produces ATP from ADP in the presence of a proton or sodium gradient. F-type ATPases consist of two structural domains, F(1) containing the extramembraneous catalytic core and F(0) containing the membrane proton channel, linked together by a central stalk and a peripheral stalk. During catalysis, ATP synthesis in the catalytic domain of F(1) is coupled via a rotary mechanism of the central stalk subunits to proton translocation. Key component of the F(0) channel; it plays a direct role in translocation across the membrane. A homomeric c-ring of between 10-14 subunits forms the central stalk rotor element with the F(1) delta and epsilon subunits. This chain is ATP synthase subunit c, found in Rickettsia typhi (strain ATCC VR-144 / Wilmington).